A 306-amino-acid chain; its full sequence is Agmatinase (306 aa).

Mn(2+) is bound by residues histidine 126, aspartate 149, histidine 151, aspartate 153, aspartate 230, and aspartate 232.

The protein belongs to the arginase family. Agmatinase subfamily. The cofactor is Mn(2+).

The enzyme catalyses agmatine + H2O = urea + putrescine. The protein operates within amine and polyamine biosynthesis; putrescine biosynthesis via agmatine pathway; putrescine from agmatine: step 1/1. Its function is as follows. Catalyzes the formation of putrescine from agmatine. The protein is Agmatinase of Cronobacter sakazakii (strain ATCC BAA-894) (Enterobacter sakazakii).